Here is a 162-residue protein sequence, read N- to C-terminus: Cytochrome c-type biogenesis protein CcmE (162 aa).

Over 1–8 (MNPVRKKR) the chain is Cytoplasmic. The helical; Signal-anchor for type II membrane protein transmembrane segment at 9–29 (LIIVLAIVVGVGAAVGLALSA) threads the bilayer. The Periplasmic segment spans residues 30-162 (LQQNINLFYT…GETSYNQEGK (133 aa)). The heme site is built by histidine 124 and tyrosine 128. The segment covering 139–148 (DSGQLKHYEN) has biased composition (basic and acidic residues). The tract at residues 139 to 162 (DSGQLKHYENGKAAGETSYNQEGK) is disordered.

This sequence belongs to the CcmE/CycJ family.

The protein resides in the cell inner membrane. Functionally, heme chaperone required for the biogenesis of c-type cytochromes. Transiently binds heme delivered by CcmC and transfers the heme to apo-cytochromes in a process facilitated by CcmF and CcmH. The chain is Cytochrome c-type biogenesis protein CcmE from Pseudomonas aeruginosa (strain LESB58).